The sequence spans 215 residues: Pyrrolidone-carboxylate peptidase (215 aa).

Catalysis depends on residues Glu-80, Cys-143, and His-167.

The protein belongs to the peptidase C15 family. Homotetramer.

It localises to the cytoplasm. The catalysed reaction is Release of an N-terminal pyroglutamyl group from a polypeptide, the second amino acid generally not being Pro.. Its function is as follows. Removes 5-oxoproline from various penultimate amino acid residues except L-proline. The chain is Pyrrolidone-carboxylate peptidase from Bacillus cereus (strain G9842).